The primary structure comprises 602 residues: Cholinesterase (602 aa).

The first 28 residues, 1–28 (MHSKVTIICIRFLFWFLLLCMLIGKSHT), serve as a signal peptide directing secretion. 2 N-linked (GlcNAc...) (complex) asparagine glycosylation sites follow: Asn-45 and Asn-85. Residues Cys-93 and Cys-120 are joined by a disulfide bond. Trp-110 contributes to the tacrine binding site. Asn-134 is a glycosylation site (N-linked (GlcNAc...) (complex) asparagine). 144 to 145 (GG) is a binding site for substrate. Ser-226 serves as the catalytic Acyl-ester intermediate. At Ser-226 the chain carries Phosphoserine. Residues Asn-269 and Asn-284 are each glycosylated (N-linked (GlcNAc...) (complex) asparagine). Cys-280 and Cys-291 are disulfide-bonded. Catalysis depends on Glu-353, which acts as the Charge relay system. Asn-369 carries an N-linked (GlcNAc...) (complex) asparagine glycan. Residues Cys-428 and Cys-547 are joined by a disulfide bond. Residue His-466 participates in tacrine binding. Residue His-466 is the Charge relay system of the active site. An N-linked (GlcNAc...) (complex) asparagine glycan is attached at Asn-483. N-linked (GlcNAc...) asparagine glycans are attached at residues Asn-509, Asn-513, and Asn-514.

The protein belongs to the type-B carboxylesterase/lipase family. Homotetramer; disulfide-linked. Dimer of dimers. In terms of processing, N-glycosylated. No other PTM detected. The major N-glycan structures are of the complex diantennary type with 1 and 2 N-acetylneuraminic acid molecules (Neu5Ac) making up approximately 33% and 47% of the total N-glycans, respectively. Only low amounts of fucosylated diantennary N-glycans are detected (approximately 2%). Triantennary N-glycans with or without fucose amount to approximately 13%, whereas 5% of the total N-glycans are of the oligomannosidic or hybrid type. In terms of tissue distribution, detected in blood plasma (at protein level). Present in most cells except erythrocytes.

Its subcellular location is the secreted. The enzyme catalyses an acylcholine + H2O = a carboxylate + choline + H(+). Its activity is regulated as follows. Inhibited by mercury. Inhibited by Tabun. Tabun forms a covalent adduct with Ser-226 that becomes irreversible upon aging. Functionally, esterase with broad substrate specificity. Contributes to the inactivation of the neurotransmitter acetylcholine. Can degrade neurotoxic organophosphate esters. This chain is Cholinesterase (BCHE), found in Homo sapiens (Human).